A 213-amino-acid polypeptide reads, in one-letter code: Large ribosomal subunit protein uL3 (213 aa).

This sequence belongs to the universal ribosomal protein uL3 family. Part of the 50S ribosomal subunit. Forms a cluster with proteins L14 and L19.

Its function is as follows. One of the primary rRNA binding proteins, it binds directly near the 3'-end of the 23S rRNA, where it nucleates assembly of the 50S subunit. The protein is Large ribosomal subunit protein uL3 of Desulforudis audaxviator (strain MP104C).